The chain runs to 132 residues: Telomere bouquet protein 1 (132 aa).

In terms of assembly, interacts with bqt2 and sad1. The bqt1-bqt2-sad1 complex binds rap1.

Its subcellular location is the cytoplasm. It is found in the cytoskeleton. The protein localises to the microtubule organizing center. The protein resides in the spindle pole body. It localises to the chromosome. Its subcellular location is the telomere. Involved in chromosome segregation. During meiotic prophase, connects telomeres to the spindle pole body by forming a bridge between the telomere protein rap1 and the spindle pole body protein sad1. This chain is Telomere bouquet protein 1 (bqt1), found in Schizosaccharomyces pombe (strain 972 / ATCC 24843) (Fission yeast).